The following is a 186-amino-acid chain: Nucleoside diphosphate kinase 6 (186 aa).

Lys-19, Phe-68, Arg-96, Thr-102, Arg-116, and Asn-126 together coordinate ATP. The Pros-phosphohistidine intermediate role is filled by His-129.

Belongs to the NDK family. Mg(2+) serves as cofactor. Expressed at a moderately low level in many tissues. Most abundant in kidney, prostate, ovary, intestine, and spleen.

The catalysed reaction is a 2'-deoxyribonucleoside 5'-diphosphate + ATP = a 2'-deoxyribonucleoside 5'-triphosphate + ADP. It carries out the reaction a ribonucleoside 5'-diphosphate + ATP = a ribonucleoside 5'-triphosphate + ADP. In terms of biological role, major role in the synthesis of nucleoside triphosphates other than ATP. The ATP gamma phosphate is transferred to the NDP beta phosphate via a ping-pong mechanism, using a phosphorylated active-site intermediate. Inhibitor of p53-induced apoptosis. This chain is Nucleoside diphosphate kinase 6 (NME6), found in Homo sapiens (Human).